We begin with the raw amino-acid sequence, 68 residues long: Large ribosomal subunit protein uL29 (68 aa).

It belongs to the universal ribosomal protein uL29 family.

This chain is Large ribosomal subunit protein uL29, found in Geobacillus sp. (strain WCH70).